The chain runs to 84 residues: Exodeoxyribonuclease 7 small subunit (84 aa).

Residues 65-84 are disordered; sequence QEGDWTTSPFEPASGEPPGG.

This sequence belongs to the XseB family. As to quaternary structure, heterooligomer composed of large and small subunits.

It is found in the cytoplasm. The catalysed reaction is Exonucleolytic cleavage in either 5'- to 3'- or 3'- to 5'-direction to yield nucleoside 5'-phosphates.. Functionally, bidirectionally degrades single-stranded DNA into large acid-insoluble oligonucleotides, which are then degraded further into small acid-soluble oligonucleotides. The sequence is that of Exodeoxyribonuclease 7 small subunit from Syntrophobacter fumaroxidans (strain DSM 10017 / MPOB).